A 354-amino-acid chain; its full sequence is Photosystem II D2 protein (354 aa).

T2 bears the N-acetylthreonine mark. T2 carries the phosphothreonine modification. Residues 42-62 (CAYFALGGWFTGTTFVTSWYT) form a helical membrane-spanning segment. Chlorophyll a is bound at residue H119. A helical membrane pass occupies residues 126-142 (GFMLRQFELARSVQLRP). Pheophytin a is bound by residues Q131 and N144. A helical transmembrane segment spans residues 154-167 (VFVSVFLIYPLGQS). H199 provides a ligand contact to chlorophyll a. Residues 209 to 229 (AALLCAIHGATVENTLFEDGD) form a helical membrane-spanning segment. Residues H216 and F263 each contribute to the a plastoquinone site. Fe cation is bound at residue H216. Position 270 (H270) interacts with Fe cation. Residues 280-296 (GLWMSALGVVGLALNLR) traverse the membrane as a helical segment.

This sequence belongs to the reaction center PufL/M/PsbA/D family. PSII is composed of 1 copy each of membrane proteins PsbA, PsbB, PsbC, PsbD, PsbE, PsbF, PsbH, PsbI, PsbJ, PsbK, PsbL, PsbM, PsbT, PsbX, PsbY, PsbZ, Psb30/Ycf12, at least 3 peripheral proteins of the oxygen-evolving complex and a large number of cofactors. It forms dimeric complexes. The D1/D2 heterodimer binds P680, chlorophylls that are the primary electron donor of PSII, and subsequent electron acceptors. It shares a non-heme iron and each subunit binds pheophytin, quinone, additional chlorophylls, carotenoids and lipids. There is also a Cl(-1) ion associated with D1 and D2, which is required for oxygen evolution. The PSII complex binds additional chlorophylls, carotenoids and specific lipids. is required as a cofactor.

It is found in the plastid. Its subcellular location is the chloroplast thylakoid membrane. The catalysed reaction is 2 a plastoquinone + 4 hnu + 2 H2O = 2 a plastoquinol + O2. Its function is as follows. Photosystem II (PSII) is a light-driven water:plastoquinone oxidoreductase that uses light energy to abstract electrons from H(2)O, generating O(2) and a proton gradient subsequently used for ATP formation. It consists of a core antenna complex that captures photons, and an electron transfer chain that converts photonic excitation into a charge separation. The D1/D2 (PsbA/PsbD) reaction center heterodimer binds P680, the primary electron donor of PSII as well as several subsequent electron acceptors. D2 is needed for assembly of a stable PSII complex. The polypeptide is Photosystem II D2 protein (Piper cenocladum (Ant piper)).